The following is a 72-amino-acid chain: Translation initiation factor IF-1 (72 aa).

An S1-like domain is found at 1–72 (MSDKSIKMQA…SNGRITYRHK (72 aa)).

The protein belongs to the IF-1 family. As to quaternary structure, component of the 30S ribosomal translation pre-initiation complex which assembles on the 30S ribosome in the order IF-2 and IF-3, IF-1 and N-formylmethionyl-tRNA(fMet); mRNA recruitment can occur at any time during PIC assembly.

It is found in the cytoplasm. One of the essential components for the initiation of protein synthesis. Stabilizes the binding of IF-2 and IF-3 on the 30S subunit to which N-formylmethionyl-tRNA(fMet) subsequently binds. Helps modulate mRNA selection, yielding the 30S pre-initiation complex (PIC). Upon addition of the 50S ribosomal subunit IF-1, IF-2 and IF-3 are released leaving the mature 70S translation initiation complex. The protein is Translation initiation factor IF-1 of Mycoplasmopsis pulmonis (strain UAB CTIP) (Mycoplasma pulmonis).